Here is a 300-residue protein sequence, read N- to C-terminus: B1 kinase (300 aa).

The Protein kinase domain maps to 16–282; it reads WVVGPLIGKG…ITMVNSLTYF (267 aa). ATP contacts are provided by residues 22–30 and Lys45; that span reads IGKGGFGSI. Catalysis depends on Asn147, which acts as the Proton acceptor.

Belongs to the protein kinase superfamily. Ser/Thr protein kinase family. Poxviruses subfamily. Interacts with host JIP1; this interaction increases the amount of MAPK bound to JIP1 and subsequently increases the activity of transcription factors, such as JUN, that respond to these complexes. Interacts with protein OPG198; this interaction inhibits the repressive activity of OPG198 pseudokinase on viral replication factory formation. Requires Mg(2+) as cofactor. Post-translationally, autophosphorylated.

It localises to the virion. Its subcellular location is the host cytoplasm. The catalysed reaction is L-seryl-[protein] + ATP = O-phospho-L-seryl-[protein] + ADP + H(+). The enzyme catalyses L-threonyl-[protein] + ATP = O-phospho-L-threonyl-[protein] + ADP + H(+). In terms of biological role, essential serine/threonine-protein kinase that plays different role in the viral life cycle. Phosphorylates the host small ribosomal protein RACK1 thereby customizing the ribosomes to a state optimal for viral mRNAs (which contain poly-A leaders) but not for host mRNAs. Facilitates viral DNA replication by inhibiting host BANF1, a cellular host defense responsive to foreign DNA. Phosphorylates host BANF1 on serine and threonine residues; this leads to BANF1 relocalization to the cytoplasm, loss of dimerization and impaired DNA binding activity. Indeed, BANF1 activity depends on its DNA-binding property which is blocked by VPK1-mediated phosphorylation. Required for viral intermediate genes expression, probably by inhibiting host BANF1. Modulates cellular responses via host JUN by two different mechanisms, either by direct phosphorylation or by modulation of upstream JIP1-MAPK complexes. Seems to participate in the accumulation/processing of late proteins and thus in virion maturation. In addition, inhibits B12 repressive activity on viral DNA replication via a phosphorylation-dependent mechanism. This chain is B1 kinase (OPG187), found in Homo sapiens (Human).